Consider the following 484-residue polypeptide: Acetyl-coenzyme A carboxylase carboxyl transferase subunit beta, chloroplastic (484 aa).

Residues 223-484 (LWIQCDNCYG…LHAFFPLNKN (262 aa)) form the CoA carboxyltransferase N-terminal domain. The Zn(2+) site is built by C227, C230, C243, and C246. The C4-type zinc finger occupies 227 to 246 (CDNCYGLMYKKVKMNVCEQC).

It belongs to the AccD/PCCB family. As to quaternary structure, acetyl-CoA carboxylase is a heterohexamer composed of biotin carboxyl carrier protein, biotin carboxylase and 2 subunits each of ACCase subunit alpha and ACCase plastid-coded subunit beta (accD). Zn(2+) serves as cofactor.

It is found in the plastid. Its subcellular location is the chloroplast stroma. It catalyses the reaction N(6)-carboxybiotinyl-L-lysyl-[protein] + acetyl-CoA = N(6)-biotinyl-L-lysyl-[protein] + malonyl-CoA. It participates in lipid metabolism; malonyl-CoA biosynthesis; malonyl-CoA from acetyl-CoA: step 1/1. Functionally, component of the acetyl coenzyme A carboxylase (ACC) complex. Biotin carboxylase (BC) catalyzes the carboxylation of biotin on its carrier protein (BCCP) and then the CO(2) group is transferred by the transcarboxylase to acetyl-CoA to form malonyl-CoA. The sequence is that of Acetyl-coenzyme A carboxylase carboxyl transferase subunit beta, chloroplastic from Olimarabidopsis pumila (Dwarf rocket).